The following is a 276-amino-acid chain: Omega-amidase NIT2 (276 aa).

One can recognise a CN hydrolase domain in the interval F4 to L248. S26 is subject to Phosphoserine. The active-site Proton acceptor is E43. K68 is modified (N6-acetyllysine; alternate). The residue at position 68 (K68) is an N6-succinyllysine; alternate. K112 functions as the Proton donor in the catalytic mechanism. Residues K123 and K130 each carry the N6-succinyllysine modification. C153 acts as the Nucleophile in catalysis.

As to quaternary structure, homodimer. In terms of tissue distribution, detected in fetal brain (at protein level). Ubiquitous. Detected in heart, brain, placenta, lung, liver, skeletal muscle, kidney, pancreas, prostate, spleen, thymus, prostate, testis, ovary, small intestine and colon.

Its subcellular location is the cytoplasm. The enzyme catalyses a monoamide of a dicarboxylate + H2O = a dicarboxylate + NH4(+). The catalysed reaction is 2-oxoglutaramate + H2O = 2-oxoglutarate + NH4(+). It carries out the reaction 2-oxosuccinamate + H2O = oxaloacetate + NH4(+). Functionally, has omega-amidase activity. The role of omega-amidase is to remove potentially toxic intermediates by converting 2-oxoglutaramate and 2-oxosuccinamate to biologically useful 2-oxoglutarate and oxaloacetate, respectively. This Homo sapiens (Human) protein is Omega-amidase NIT2 (NIT2).